Consider the following 315-residue polypeptide: Ester hydrolase C11orf54 homolog (315 aa).

The Zn(2+) site is built by His266, His268, and His278.

Monomer. The cofactor is Zn(2+).

It is found in the nucleus. It localises to the cytoplasm. Its function is as follows. Exhibits ester hydrolase activity on the substrate p-nitrophenyl acetate, in vitro. Regulates DNA damage and repair by regulating HIF1A degradation via chaperone-mediated autophagy (CMA). The protein is Ester hydrolase C11orf54 homolog of Mus musculus (Mouse).